We begin with the raw amino-acid sequence, 506 residues long: Maturase K (506 aa).

The protein belongs to the intron maturase 2 family. MatK subfamily.

The protein resides in the plastid. The protein localises to the chloroplast. In terms of biological role, usually encoded in the trnK tRNA gene intron. Probably assists in splicing its own and other chloroplast group II introns. The chain is Maturase K from Uncarina grandidieri (Mouse trap tree).